The primary structure comprises 449 residues: Probable glycosyltransferase 5 (449 aa).

A compositionally biased stretch (basic and acidic residues) spans 1 to 14; that stretch reads MMEKHGGKVTSDRR. A disordered region spans residues 1-24; sequence MMEKHGGKVTSDRRAGRRQHGQRC. Residues 1–28 are Cytoplasmic-facing; sequence MMEKHGGKVTSDRRAGRRQHGQRCSASD. A helical; Signal-anchor for type II membrane protein membrane pass occupies residues 29–49; sequence AAPLVVVVILIVGALFLILGP. The Lumenal segment spans residues 50-449; the sequence is TGSSSFTVPR…HPTFRAARPT (400 aa). Residues 74–109 form a disordered region; it reads APPPPPPPAQMQAGANASSEEDSGLPPPRQLTDPPY. N-linked (GlcNAc...) asparagine glycosylation is found at N89, N413, and N422.

It belongs to the glycosyltransferase 34 family.

The protein resides in the golgi apparatus membrane. Functionally, probable glycosyltransferase that may be involved in the biosynthesis of xyloglucan. The protein is Probable glycosyltransferase 5 of Oryza sativa subsp. indica (Rice).